Reading from the N-terminus, the 623-residue chain is Zinc finger protein 143 (623 aa).

7 C2H2-type zinc fingers span residues 230–254 (FRCEHEGCGKLYTTAHHLKVHERSH), 260–284 (YICDHLGCGKKFATGYGLKSHVRTH), 290–314 (YRCQELNCLKSFKTSGDLQKHTRTH), 320–344 (FKCPFEGCGRSFTTSNIRKVHIRTH), 350–374 (YYCAEPNCGRAFASATNYKNHMRIH), 380–404 (YVCTVPGCDKRFTEYSSLYKHHVVH), and 410–433 (YNCNHCGKTYKQISTLAMHKRTAH).

It belongs to the GLI C2H2-type zinc-finger protein family.

It is found in the nucleus. Transcriptional activator. Activates the gene for selenocysteine tRNA (tRNAsec). Binds to the activator element (AE) motif of the selenocysteine tRNA gene promoter. This chain is Zinc finger protein 143 (znf143), found in Danio rerio (Zebrafish).